Here is a 217-residue protein sequence, read N- to C-terminus: Protein-methionine-sulfoxide reductase heme-binding subunit MsrQ (217 aa).

4 consecutive transmembrane segments (helical) span residues 82–102, 118–138, 150–170, and 180–200; these read MLGL…LLVD, PFIT…ATST, WQWL…HYWW, and EVSI…WWVW.

This sequence belongs to the MsrQ family. Heterodimer of a catalytic subunit (MsrP) and a heme-binding subunit (MsrQ). FMN is required as a cofactor. It depends on heme b as a cofactor.

It localises to the cell inner membrane. In terms of biological role, part of the MsrPQ system that repairs oxidized periplasmic proteins containing methionine sulfoxide residues (Met-O), using respiratory chain electrons. Thus protects these proteins from oxidative-stress damage caused by reactive species of oxygen and chlorine generated by the host defense mechanisms. MsrPQ is essential for the maintenance of envelope integrity under bleach stress, rescuing a wide series of structurally unrelated periplasmic proteins from methionine oxidation. MsrQ provides electrons for reduction to the reductase catalytic subunit MsrP, using the quinone pool of the respiratory chain. The polypeptide is Protein-methionine-sulfoxide reductase heme-binding subunit MsrQ (Ralstonia nicotianae (strain ATCC BAA-1114 / GMI1000) (Ralstonia solanacearum)).